We begin with the raw amino-acid sequence, 342 residues long: Probable dual-specificity RNA methyltransferase RlmN (342 aa).

The Proton acceptor role is filled by E91. One can recognise a Radical SAM core domain in the interval 97 to 326; that stretch reads YKFGNTACVS…CTVRRELGSD (230 aa). A disulfide bridge connects residues C104 and C331. The [4Fe-4S] cluster site is built by C111, C115, and C118. S-adenosyl-L-methionine is bound by residues 157-158, S189, 212-214, and N288; these read GE and SLH. The active-site S-methylcysteine intermediate is the C331.

The protein belongs to the radical SAM superfamily. RlmN family. It depends on [4Fe-4S] cluster as a cofactor.

Its subcellular location is the cytoplasm. The enzyme catalyses adenosine(2503) in 23S rRNA + 2 reduced [2Fe-2S]-[ferredoxin] + 2 S-adenosyl-L-methionine = 2-methyladenosine(2503) in 23S rRNA + 5'-deoxyadenosine + L-methionine + 2 oxidized [2Fe-2S]-[ferredoxin] + S-adenosyl-L-homocysteine. It carries out the reaction adenosine(37) in tRNA + 2 reduced [2Fe-2S]-[ferredoxin] + 2 S-adenosyl-L-methionine = 2-methyladenosine(37) in tRNA + 5'-deoxyadenosine + L-methionine + 2 oxidized [2Fe-2S]-[ferredoxin] + S-adenosyl-L-homocysteine. Specifically methylates position 2 of adenine 2503 in 23S rRNA and position 2 of adenine 37 in tRNAs. In Caldanaerobacter subterraneus subsp. tengcongensis (strain DSM 15242 / JCM 11007 / NBRC 100824 / MB4) (Thermoanaerobacter tengcongensis), this protein is Probable dual-specificity RNA methyltransferase RlmN.